The sequence spans 507 residues: Cysteine--tRNA ligase (507 aa).

A Zn(2+)-binding site is contributed by Cys29. Residues 31 to 41 (PTVYDVPHIGN) carry the 'HIGH' region motif. 3 residues coordinate Zn(2+): Cys207, His232, and Glu236. A 'KMSKS' region motif is present at residues 265–269 (KMSKS). Residue Lys268 participates in ATP binding.

Belongs to the class-I aminoacyl-tRNA synthetase family. Monomer. Zn(2+) is required as a cofactor.

It is found in the cytoplasm. It catalyses the reaction tRNA(Cys) + L-cysteine + ATP = L-cysteinyl-tRNA(Cys) + AMP + diphosphate. The sequence is that of Cysteine--tRNA ligase from Neorickettsia sennetsu (strain ATCC VR-367 / Miyayama) (Ehrlichia sennetsu).